Reading from the N-terminus, the 384-residue chain is 4-hydroxy-3-methylbut-2-en-1-yl diphosphate synthase (flavodoxin) (384 aa).

Residues cysteine 280, cysteine 283, cysteine 315, and glutamate 322 each coordinate [4Fe-4S] cluster.

The protein belongs to the IspG family. Requires [4Fe-4S] cluster as cofactor.

It carries out the reaction (2E)-4-hydroxy-3-methylbut-2-enyl diphosphate + oxidized [flavodoxin] + H2O + 2 H(+) = 2-C-methyl-D-erythritol 2,4-cyclic diphosphate + reduced [flavodoxin]. It functions in the pathway isoprenoid biosynthesis; isopentenyl diphosphate biosynthesis via DXP pathway; isopentenyl diphosphate from 1-deoxy-D-xylulose 5-phosphate: step 5/6. Functionally, converts 2C-methyl-D-erythritol 2,4-cyclodiphosphate (ME-2,4cPP) into 1-hydroxy-2-methyl-2-(E)-butenyl 4-diphosphate. This chain is 4-hydroxy-3-methylbut-2-en-1-yl diphosphate synthase (flavodoxin), found in Parafrankia sp. (strain EAN1pec).